Reading from the N-terminus, the 141-residue chain is Cytochrome c-type biogenesis protein CcmE (141 aa).

Over methionine 1–arginine 7 the chain is Cytoplasmic. Residues leucine 8–alanine 28 form a helical; Signal-anchor for type II membrane protein membrane-spanning segment. At leucine 29–glycine 141 the chain is on the periplasmic side. Heme contacts are provided by histidine 125 and tyrosine 129.

The protein belongs to the CcmE/CycJ family.

Its subcellular location is the cell inner membrane. In terms of biological role, heme chaperone required for the biogenesis of c-type cytochromes. Transiently binds heme delivered by CcmC and transfers the heme to apo-cytochromes in a process facilitated by CcmF and CcmH. The polypeptide is Cytochrome c-type biogenesis protein CcmE (Hyphomonas neptunium (strain ATCC 15444)).